The primary structure comprises 582 residues: MEPSKLFTMSDNATFAPGPVINAADKKTFRTCFRILVLSVQAVTLILVIVTLGELVRMINDQGLSNQLSSIADKIRESATMIASAVGVMNQVIHGVTVSLPLQIEGNQNQLLSTLATICTGKKQVSNCSTNIPLVNDLRFINGINKFIIEDYATHDFSIGHPLNMPSFIPTATSPNGCTRIPSFSLGKTHWCYTHNVINANCKDHTSSNQYISMGILVQTASGYPMFKTLKIQYLSDGLNRKSCSIATVPDGCAMYCYVSTQLETDDYAGSSPPTQKLTLLFYNDTVTERTISPTGLEGNWATLVPGVGSGIYFENKLIFPAYGGVLPNSSLGVKSAREFFRPVNPYNPCSGPQQDLDQRALRSYFPSYFSNRRVQSAFLVCAWNQILVTNCELVVPSNNQTLMGAEGRVLLINNRLLYYQRSTSWWPYELLYEISFTFTNSGQSSVNMSWIPIYSFTRPGSGNCSGENVCPTACVSGVYLDPWPLTPYSHQSGINRNFYFTGALLNSSTTRVNPTLYVSALNNLKVLAPYGNQGLFASYTTTTCFQDTGDASVYCVYIMELASNIVGEFQILPVLTRLTIT.

The Intravirion segment spans residues 1-34; it reads MEPSKLFTMSDNATFAPGPVINAADKKTFRTCFR. The helical; Signal-anchor for type II membrane protein transmembrane segment at 35 to 55 threads the bilayer; that stretch reads ILVLSVQAVTLILVIVTLGEL. Residues 56–582 lie on the Virion surface side of the membrane; sequence VRMINDQGLS…LPVLTRLTIT (527 aa). Asparagine 127 is a glycosylation site (N-linked (GlcNAc...) asparagine; by host). 3 disulfides stabilise this stretch: cysteine 178–cysteine 202, cysteine 192–cysteine 253, and cysteine 244–cysteine 257. The segment at 240–245 is involved in neuraminidase activity; it reads NRKSCS. N-linked (GlcNAc...) asparagine; by host glycosylation is found at asparagine 284 and asparagine 329. Disulfide bonds link cysteine 350/cysteine 471, cysteine 382/cysteine 392, and cysteine 465/cysteine 475. Asparagine 400, asparagine 448, and asparagine 464 each carry an N-linked (GlcNAc...) asparagine; by host glycan. An N-linked (GlcNAc...) asparagine; by host glycan is attached at asparagine 507. Cysteine 545 and cysteine 556 are joined by a disulfide.

The protein belongs to the paramyxoviruses hemagglutinin-neuraminidase family. Homotetramer; composed of disulfide-linked homodimers. Interacts with F protein trimer.

The protein resides in the virion membrane. Its subcellular location is the host cell membrane. It catalyses the reaction Hydrolysis of alpha-(2-&gt;3)-, alpha-(2-&gt;6)-, alpha-(2-&gt;8)- glycosidic linkages of terminal sialic acid residues in oligosaccharides, glycoproteins, glycolipids, colominic acid and synthetic substrates.. In terms of biological role, attaches the virus to alpha-2,3-linked sialic acid-containing cell receptors and thereby initiating infection. Binding of HN protein to the receptor induces a conformational change that allows the F protein to trigger virion/cell membranes fusion. Binds to the glycan motifs sialyl Lewis (SLe) and GM2 ganglioside (GM2-glycan). Functionally, neuraminidase (sialidase) activity ensures the efficient spread of the virus by dissociating the mature virions from the neuraminic acid containing glycoproteins. This chain is Hemagglutinin-neuraminidase (HN), found in Mumps virus genotype B (strain Miyahara vaccine) (MuV).